Here is a 293-residue protein sequence, read N- to C-terminus: Glutamine sensor pib2 (293 aa).

Positions 38–75 (APTRQATNGTGSVSGSPNSSSNSTPANQGSLPSHTNPQ) are disordered. The segment covering 44–62 (TNGTGSVSGSPNSSSNSTP) has biased composition (low complexity). Over residues 63–75 (ANQGSLPSHTNPQ) the composition is skewed to polar residues. The segment at 156 to 220 (DVSVCSFPSC…SCVSCFYEYL (65 aa)) adopts an FYVE-type; degenerate zinc-finger fold. Residues cysteine 178, cysteine 181, cysteine 212, and cysteine 215 each contribute to the Zn(2+) site. Over residues 242 to 256 (APQQATTHPPSQPKN) the composition is skewed to polar residues. Residues 242-276 (APQQATTHPPSQPKNAVSVPIPKMDSTDSKGELPS) are disordered. At serine 259 the chain carries Phosphoserine.

Interacts with the TORC1 complex when activated by glutamine or cysteine.

The protein localises to the vacuole membrane. Activated by glutamine. Functions as an intracellular glutamine sensor that directly activates the TORC1 signaling pathway, to promote cell growth when glutamine is available. The sequence is that of Glutamine sensor pib2 from Schizosaccharomyces pombe (strain 972 / ATCC 24843) (Fission yeast).